The following is a 340-amino-acid chain: Anthranilate phosphoribosyltransferase (340 aa).

5-phospho-alpha-D-ribose 1-diphosphate is bound by residues G82, 85-86, T90, 92-95, 110-118, and S122; these read GD, NIST, and KHGSRSVSS. G82 lines the anthranilate pocket. Mg(2+) is bound at residue S94. R168 lines the anthranilate pocket. Mg(2+) contacts are provided by D227 and E228.

Belongs to the anthranilate phosphoribosyltransferase family. In terms of assembly, homodimer. Mg(2+) serves as cofactor.

It catalyses the reaction N-(5-phospho-beta-D-ribosyl)anthranilate + diphosphate = 5-phospho-alpha-D-ribose 1-diphosphate + anthranilate. The protein operates within amino-acid biosynthesis; L-tryptophan biosynthesis; L-tryptophan from chorismate: step 2/5. In terms of biological role, catalyzes the transfer of the phosphoribosyl group of 5-phosphorylribose-1-pyrophosphate (PRPP) to anthranilate to yield N-(5'-phosphoribosyl)-anthranilate (PRA). This chain is Anthranilate phosphoribosyltransferase, found in Hydrogenovibrio crunogenus (strain DSM 25203 / XCL-2) (Thiomicrospira crunogena).